The following is a 104-amino-acid chain: Complex III assembly factor LYRM7 (104 aa).

Serine 60 is subject to Phosphoserine.

The protein belongs to the complex I LYR family. Interacts with UQCRFS1.

It is found in the mitochondrion matrix. Assembly factor required for Rieske Fe-S protein UQCRFS1 incorporation into the cytochrome b-c1 (CIII) complex. Functions as a chaperone, binding to this subunit within the mitochondrial matrix and stabilizing it prior to its translocation and insertion into the late CIII dimeric intermediate within the mitochondrial inner membrane. This Pongo abelii (Sumatran orangutan) protein is Complex III assembly factor LYRM7 (LYRM7).